Here is a 1452-residue protein sequence, read N- to C-terminus: Arf-GAP with Rho-GAP domain, ANK repeat and PH domain-containing protein 1 (1452 aa).

The SAM domain occupies 6–70 (DAALSVAEWL…LAGLHRAHAP (65 aa)). The interval 81–90 (PVPMKRHIFR) is required for interaction with SH3KBP1. Disordered stretches follow at residues 87-258 (HIFR…LPSR) and 271-304 (EGEE…LNPP). Composition is skewed to pro residues over residues 92–104 (PPVP…PPPT), 154–167 (SVPP…PPYP), and 205–225 (PLQP…PPRL). Composition is skewed to acidic residues over residues 228-239 (EFDDSDYDDVPE) and 271-286 (EGEE…DDDH). A Phosphoserine modification is found at Ser-232. A Phosphotyrosine; by PTK6 modification is found at Tyr-234. The 93-residue stretch at 329-421 (PVIKAGWLDK…WMQALQQAVV (93 aa)) folds into the PH 1 domain. Ser-430 is subject to Phosphoserine. The PH 2 domain maps to 442–531 (QPDRAGSLEL…WLEAMQGAIA (90 aa)). At Tyr-506 the chain carries Phosphotyrosine. The Arf-GAP domain maps to 537–662 (SEVAERIWAA…RYHPLFGNQE (126 aa)). The C4-type zinc finger occupies 552–575 (CADCGAAQPDWASINLCVVICKRC). At Ser-740 the chain carries Phosphoserine. The region spanning 745–852 (TVSHSGFLYK…WVKCIAKAFV (108 aa)) is the PH 3 domain. In terms of domain architecture, Rho-GAP spans 956-1141 (ASLGDTLSEQ…DLINHYVVVF (186 aa)). One can recognise a Ras-associating domain in the interval 1174 to 1263 (GDFICTVYLE…SHLVVKKYQS (90 aa)). Residues 1276–1398 (GDTKHGMMKF…WFATFLSVQH (123 aa)) enclose the PH 4 domain. A phosphoserine mark is found at Ser-1430 and Ser-1437.

Interacts with SH3KBP1/CIN85 (via SH3 domains). The interaction is independent of EGF and does not affect ARAP1 GTPase-activating activity but is involved in regulating ubiquitination and endocytic trafficking of EGFR. ARAP1 competes with E3 ubiquitin-protein ligase CBL for binding to SH3KBP1, preventing interaction of CBL with SH3KBP1; this is likely to regulate SH3KBP1-mediated internalization of EGFR. Interacts with TNFRSF10A. In terms of processing, phosphorylated by PTK6 following EGF stimulation which enhances EGFR signaling by delaying EGFR down-regulation; the interaction is mediated by the SH2 domain of PTK6. Phosphorylation promotes association with the Golgi apparatus and endosomes. Expressed in the retina where it is detected in Mueller glia (at protein level). Also detected in the retinal pigment epithelium (at protein level). Expressed in osteoclasts (at protein level).

It localises to the cytoplasm. The protein localises to the golgi apparatus. Its subcellular location is the trans-Golgi network. It is found in the golgi stack membrane. The protein resides in the cell membrane. It localises to the endosome. The protein localises to the multivesicular body. Its subcellular location is the cell projection. It is found in the ruffle. The protein resides in the podosome. It localises to the early endosome. Functionally, phosphatidylinositol 3,4,5-trisphosphate-dependent GTPase-activating protein that modulates actin cytoskeleton remodeling by regulating ARF and RHO family members. Activated by phosphatidylinositol 3,4,5-trisphosphate (PtdIns(3,4,5)P3) binding and, to a lesser extent, by phosphatidylinositol 3,4-bisphosphate (PtdIns(3,4)P2) binding. Has a preference for ARF1 and ARF5. Positively regulates the ring size of circular dorsal ruffles and promotes macropinocytosis. Acts as a bridging factor in osteoclasts to control actin and membrane dynamics. Regulates the condensing of osteoclast podosomes into sealing zones which segregate the bone-facing membrane from other membrane domains and are required for osteoclast resorption activity. Also regulates recruitment of the AP-3 complex to endosomal membranes and trafficking of lysosomal membrane proteins to the ruffled membrane border of osteoclasts to modulate bone resorption. Regulates the endocytic trafficking of EGFR. Regulates the incorporation of CD63 and CD9 into multivesicular bodies. Required in the retinal pigment epithelium (RPE) for photoreceptor survival due to its role in promoting RPE phagocytosis. This chain is Arf-GAP with Rho-GAP domain, ANK repeat and PH domain-containing protein 1, found in Mus musculus (Mouse).